A 345-amino-acid chain; its full sequence is 4-hydroxy-2-oxovalerate aldolase 3 (345 aa).

In terms of domain architecture, Pyruvate carboxyltransferase spans 8-260; the sequence is ITVHDMTLRD…ETGVDVWKIQ (253 aa). 16 to 17 contributes to the substrate binding site; that stretch reads RD. Asp-17 lines the Mn(2+) pocket. His-20 functions as the Proton acceptor in the catalytic mechanism. Ser-170 and His-199 together coordinate substrate. Mn(2+) contacts are provided by His-199 and His-201. Tyr-290 provides a ligand contact to substrate.

It belongs to the 4-hydroxy-2-oxovalerate aldolase family.

It carries out the reaction (S)-4-hydroxy-2-oxopentanoate = acetaldehyde + pyruvate. In Comamonas testosteroni (Pseudomonas testosteroni), this protein is 4-hydroxy-2-oxovalerate aldolase 3 (aphG).